We begin with the raw amino-acid sequence, 3303 residues long: Protein unc-80 homolog (3303 aa).

Residues 1 to 37 are compositionally biased toward low complexity; it reads MVTNAAGTAATGGATSNTTNNNNLQTNNNSHGANNNN. Positions 1-43 are disordered; that stretch reads MVTNAAGTAATGGATSNTTNNNNLQTNNNSHGANNNNDDFDFD. A helical transmembrane segment spans residues 202 to 222; the sequence is LFSVPTITLFVYLFAPIIHHL. 7 disordered regions span residues 284 to 316, 361 to 422, 491 to 512, 526 to 546, 1036 to 1067, 1443 to 1563, and 1627 to 1671; these read LSAD…VSSP, LQQQ…SESI, LYQG…KDYI, AEEP…KKKR, FRRR…SERN, LHEP…DDTA, and VEPT…KDRI. Residues 361 to 377 show a composition bias toward low complexity; it reads LQQQQSQSRRGSRQSMN. 2 stretches are compositionally biased toward basic and acidic residues: residues 378-391 and 401-422; these read SRDK…KFEF and SMKE…SESI. Residues 495 to 505 are compositionally biased toward polar residues; sequence PGSNSRDSPGS. Residues 1058–1067 are compositionally biased toward polar residues; the sequence is SDSTSSSERN. Basic residues predominate over residues 1490–1499; that stretch reads FKRRSLKLRR. Residues 1546 to 1556 are compositionally biased toward polar residues; it reads DDQQPESPTDS. A compositionally biased stretch (basic and acidic residues) spans 1660 to 1671; that stretch reads KRKDSLSRKDRI. 3 consecutive transmembrane segments (helical) span residues 1969–1989, 2018–2038, and 2048–2068; these read VYEI…ALFL, LPQQ…MFYV, and LVGS…GIMF. Disordered stretches follow at residues 2518-2550, 3003-3158, and 3170-3262; these read NGPY…FEEE, EEKR…FKAQ, and FRHS…YRDN. A compositionally biased stretch (basic and acidic residues) spans 3003 to 3018; it reads EEKRYDRESSEQKKSD. 2 stretches are compositionally biased toward polar residues: residues 3033–3053 and 3071–3106; these read QRPS…SHSH and PSDT…SQSG. Residues 3124–3134 show a composition bias toward gly residues; the sequence is SGHGSGGGIGT. Residues 3135–3152 are compositionally biased toward low complexity; the sequence is GAASAVPSHLSHSQSLQQ. Residues 3198–3217 are compositionally biased toward basic residues; it reads SRLQRSKAASRKTFRLKRSR. Polar residues predominate over residues 3226-3239; sequence IVTSQEEQAPQAQA. The segment covering 3246–3257 has biased composition (low complexity); the sequence is SWDSVSQTSSTS.

Belongs to the unc-80 family. As to quaternary structure, interacts with unc79 and na. Can interact with unc79 independently of na.

It localises to the membrane. In terms of biological role, component of the na (narrow abdomen) sodium channel complex. In the circadian clock neurons it functions with na and unc79 to promote circadian rhythmicity. This Drosophila melanogaster (Fruit fly) protein is Protein unc-80 homolog.